The primary structure comprises 177 residues: MAHPVQSEFPSAQEPGSAAFLDLPEMEILLTKAENKDDKTLNLSKTLSGPLDLEQNSQGLPFKAISEGHLEAPLPRSPSRASSRRASSIATTSYAQDQEAPRDYLILAVVACFCPVWPLNLIPLIISIMSRSSMQQGNVDGARRLGRLARLLSITLIIMGIVIIMVAVTVNFTVQKK.

Topologically, residues 1–105 are cytoplasmic; that stretch reads MAHPVQSEFP…QDQEAPRDYL (105 aa). 3 positions are modified to phosphoserine: S48, S87, and S88. A disordered region spans residues 71–92; the sequence is EAPLPRSPSRASSRRASSIATT. Residues 72-88 show a composition bias toward low complexity; that stretch reads APLPRSPSRASSRRASS. The helical intramembrane region spans 106–126; it reads ILAVVACFCPVWPLNLIPLII. Topologically, residues 127–153 are cytoplasmic; the sequence is SIMSRSSMQQGNVDGARRLGRLARLLS. The chain crosses the membrane as a helical span at residues 154 to 174; it reads ITLIIMGIVIIMVAVTVNFTV. Over 175 to 177 the chain is Extracellular; that stretch reads QKK.

It belongs to the CD225/Dispanin family. In terms of assembly, interacts with SLC2A4; the interaction is required for proper SLC2A4 reacycling after insulin stimulation. As to expression, expressed at high levels in heart, mammary gland, adrenal gland, stomach, smooth muscle and skeletal muscle, and at lower levels in brain and lung. Strongly down-regulated in lung cancer tissues, due to hypermethylation of the corresponding locus. Expressed in adipose tissue.

The protein localises to the cell membrane. Its subcellular location is the endomembrane system. The protein resides in the cytoplasm. It is found in the perinuclear region. Its function is as follows. Regulates insulin-mediated adipose tissue glucose uptake and transport by modulation of SLC2A4 recycling. Not required for SLC2A4 membrane fusion upon an initial stimulus, but rather is necessary for proper protein recycling during prolonged insulin stimulation. The protein is Trafficking regulator of GLUT4 1 of Homo sapiens (Human).